The following is a 150-amino-acid chain: Phosphoribosyl-AMP cyclohydrolase (150 aa).

Mg(2+) is bound at residue D93. A Zn(2+)-binding site is contributed by C94. Mg(2+) is bound by residues D95 and D97. Zn(2+) contacts are provided by C112 and C119.

This sequence belongs to the PRA-CH family. In terms of assembly, homodimer. Mg(2+) serves as cofactor. The cofactor is Zn(2+).

It is found in the cytoplasm. The enzyme catalyses 1-(5-phospho-beta-D-ribosyl)-5'-AMP + H2O = 1-(5-phospho-beta-D-ribosyl)-5-[(5-phospho-beta-D-ribosylamino)methylideneamino]imidazole-4-carboxamide. Its pathway is amino-acid biosynthesis; L-histidine biosynthesis; L-histidine from 5-phospho-alpha-D-ribose 1-diphosphate: step 3/9. Its function is as follows. Catalyzes the hydrolysis of the adenine ring of phosphoribosyl-AMP. The chain is Phosphoribosyl-AMP cyclohydrolase from Rhizobium leguminosarum bv. trifolii (strain WSM2304).